Consider the following 105-residue polypeptide: Large ribosomal subunit protein bL21 (105 aa).

This sequence belongs to the bacterial ribosomal protein bL21 family. Part of the 50S ribosomal subunit. Contacts protein L20.

Functionally, this protein binds to 23S rRNA in the presence of protein L20. The polypeptide is Large ribosomal subunit protein bL21 (Rickettsia africae (strain ESF-5)).